Consider the following 1020-residue polypeptide: LLGL scribble cell polarity complex component 2 (1020 aa).

14 WD repeats span residues 36-69, 76-117, 132-169, 193-227, 233-268, 282-324, 332-366, 388-464, 508-583, 592-653, 713-769, 778-830, 835-888, and 902-925; these read SALG…FMGL, VTQI…DESF, ITVV…DRTI, ALQE…LYHF, LENI…QPEP, AITR…GQQT, VIGF…VIDL, TCSH…YKLS, QKIF…FVLV, TSLA…LRQS, VRTL…KEIQ, GILV…VSAK, LTAL…VRYS, and VFTK…SLST. The residue at position 653 (Ser653) is a Phosphoserine. Positions 653-669 are enriched in basic residues; the sequence is SFRRMRRSRVSSRKRHP. The segment at 653–689 is disordered; sequence SFRRMRRSRVSSRKRHPAGPPGEAQEGSAKAERPGLQ. Disordered regions lie at residues 938–975 and 992–1020; these read AETK…PGLV and STLE…GGAE. Phosphoserine is present on residues Ser965 and Ser1015.

The protein belongs to the WD repeat L(2)GL family. Interacts with GPSM2/LGN, PRKCI/aPKC and PARD6B/Par-6. The complex is enhanced during mitosis. Interacts with DCAF1. In terms of processing, phosphorylated at Ser-653 by PRKCI. Phosphorylation is enhanced during cell polarization induced by calcium. Phosphorylation may occur during the cell-cell contact-induced cell polarization and may contribute to the segregation of LLGL2 from the PRKCI/aPKC and PARD6B/Par-6 complex.

It is found in the cytoplasm. In terms of biological role, part of a complex with GPSM2/LGN, PRKCI/aPKC and PARD6B/Par-6, which may ensure the correct organization and orientation of bipolar spindles for normal cell division. This complex plays roles in the initial phase of the establishment of epithelial cell polarity. The polypeptide is LLGL scribble cell polarity complex component 2 (LLGL2) (Homo sapiens (Human)).